A 167-amino-acid chain; its full sequence is uncharacterized protein (167 aa).

The region spanning 9–167 (PVMRRLTLQD…DCEVRMLREL (159 aa)) is the N-acetyltransferase domain.

It belongs to the acetyltransferase family.

This is an uncharacterized protein from Escherichia coli (strain K12).